Consider the following 530-residue polypeptide: MSMPDAMPLPGVGEELKQAKEIEDAEKYSFMATVTKAPKKQIQFADDMQEFTKFPTKTGRRSLSRSISQSSTDSYSSAASYTDSSDDEVSPREKQQTNSKGSSNFCVKNIKQAEFGRREIEIAEQDMSALISLRKRAQGEKPLAGAKIVGCTHITAQTAVLIETLCALGAQCRWSACNIYSTQNEVAAALAEAGVAVFAWKGESEDDFWWCIDRCVNMDGWQANMILDDGGDLTHWVYKKYPNVFKKIRGIVEESVTGVHRLYQLSKAGKLCVPAMNVNDSVTKQKFDNLYCCRESILDGLKRTTDVMFGGKQVVVCGYGEVGKGCCAALKALGAIVYITEIDPICALQACMDGFRVVKLNEVIRQVDVVITCTGNKNVVTREHLDRMKNSCIVCNMGHSNTEIDVTSLRTPELTWERVRSQVDHVIWPDGKRVVLLAEGRLLNLSCSTVPTFVLSITATTQALALIELYNAPEGRYKQDVYLLPKKMDEYVASLHLPSFDAHLTELTDDQAKYLGLNKNGPFKPNYYRY.

Position 1 is an N-acetylmethionine (M1). The residue at position 2 (S2) is an N-acetylserine. S2 bears the Phosphoserine mark. K40 carries the post-translational modification N6-acetyllysine. The tract at residues 53–103 (KFPTKTGRRSLSRSISQSSTDSYSSAASYTDSSDDEVSPREKQQTNSKGSS) is disordered. A compositionally biased stretch (low complexity) spans 64 to 83 (SRSISQSSTDSYSSAASYTD). A PEST region spans residues 65–92 (RSISQSSTDSYSSAASYTDSSDDEVSPR). Phosphoserine is present on residues S68, S71, S74, S77, and S84. Residues 138–201 (QGEKPLAGAK…EAGVAVFAWK (64 aa)) are interaction with BCL2L10. T155, D229, E254, K284, and D288 together coordinate substrate. Residues 281-448 (SVTKQKFDNL…EGRLLNLSCS (168 aa)) are NAD binding. NAD(+)-binding positions include 318 to 322 (GYGEV), E341, and N376. Residue S391 is modified to Phosphoserine. 397-399 (MGH) contacts NAD(+). The interval 520–530 (NGPFKPNYYRY) is PDZ-binding.

This sequence belongs to the adenosylhomocysteinase family. In terms of assembly, forms multimers. Forms heteromultimers with AHCYL2 (via the C-terminal region). Interacts (when phosphorylated) with ITPR1 (when not phosphorylated); the interaction suppresses inositol 1,4,5-trisphosphate binding to ITPR1. Interacts with BCL2L10; this strengthens the interaction of AHCYL1 with ITPR1. Interacts with CFTR and SLC26A6; the interactions take place once AHCYL1 is released from ITPR1 and increase CFTR and SLC26A6 activities. Interacts with RRM1; in a phosphorylation- and (dATP)-dependent manner. Interacts (via PEST domain when phosphorylated) with SLC4A4 isoform 1 but not isoform 2; the interaction increases SLC4A4 isoform 1 activity. Interacts (when phosphorylated) with SLC9A3; the interaction is required for SLC9A3 apical location and activity. Interacts (when phosphorylated) with FIP1L1; the interaction is direct and associates AHCYL1 with the CPSF complex and RNA. Interacts with PAPOLA. Interacts with ZCCHC4. Interacts with AHCY. Requires NAD(+) as cofactor. Post-translationally, phosphorylated at Ser/Thr residues between Ser-68 and Thr-72 in the PEST region: required for interaction with dATP-bound RRM1 and ITPR1. Phosphorylation at Ser-68 by PRKD1 and CAMK4 is required for further phosphorylations by CSNK1A1. Phosphorylation is induced by oxidative stress. Probably phosphorylated by CAMK2A; phosphorylation at Ser-68 may be required for interaction with SLC9A3. Dephosphorylated in response to apoptotic stress conditions which causes translocation of both AHCYL1 and BCL2L10 from mitochondria-associated endoplasmic reticulum membranes and promotes apoptosis. As to expression, expressed in dendritic cells.

The protein resides in the endoplasmic reticulum. It localises to the cytoplasm. The protein localises to the cytosol. Its subcellular location is the apical cell membrane. It is found in the microsome. In terms of biological role, multifaceted cellular regulator which coordinates several essential cellular functions including regulation of epithelial HCO3(-) and fluid secretion, mRNA processing and DNA replication. Regulates ITPR1 sensitivity to inositol 1,4,5-trisphosphate, competing for the common binding site and acting as endogenous 'pseudoligand' whose inhibitory activity can be modulated by its phosphorylation status. Promotes the formation of contact points between the endoplasmic reticulum (ER) and mitochondria, facilitating transfer of Ca(2+) from the ER to mitochondria. Under normal cellular conditions, functions cooperatively with BCL2L10 to limit ITPR1-mediated Ca(2+) release but, under apoptotic stress conditions, dephosphorylated which promotes dissociation of both AHCYL1 and BCL2L10 from mitochondria-associated endoplasmic reticulum membranes, inhibits BCL2L10 interaction with ITPR1 and leads to increased Ca(2+) transfer to mitochondria which promotes apoptosis. In the pancreatic and salivary ducts, at resting state, attenuates inositol 1,4,5-trisphosphate-induced calcium release by interacting with ITPR1. When extracellular stimuli induce ITPR1 phosphorylation or inositol 1,4,5-trisphosphate production, dissociates from ITPR1 to interact with CFTR and SLC26A6, mediating their synergistic activation by calcium and cAMP that stimulates the epithelial secretion of electrolytes and fluid. Also activates basolateral SLC4A4 isoform 1 to coordinate fluid and HCO3(-) secretion. Inhibits the effect of STK39 on SLC4A4 and CFTR by recruiting PP1 phosphatase which activates SLC4A4, SLC26A6 and CFTR through dephosphorylation. Mediates the induction of SLC9A3 surface expression produced by Angiotensin-2. Depending on the cell type, activates SLC9A3 in response to calcium or reverses SLC9A3R2-dependent calcium inhibition. May modulate the polyadenylation state of specific mRNAs, both by controlling the subcellular location of FIP1L1 and by inhibiting PAPOLA activity, in response to a stimulus that alters its phosphorylation state. Acts as a (dATP)-dependent inhibitor of ribonucleotide reductase large subunit RRM1, controlling the endogenous dNTP pool and ensuring normal cell cycle progression. In vitro does not exhibit any S-adenosyl-L-homocysteine hydrolase activity. In Homo sapiens (Human), this protein is S-adenosylhomocysteine hydrolase-like protein 1.